A 430-amino-acid chain; its full sequence is Histidine--tRNA ligase (430 aa).

This sequence belongs to the class-II aminoacyl-tRNA synthetase family. In terms of assembly, homodimer.

It is found in the cytoplasm. It catalyses the reaction tRNA(His) + L-histidine + ATP = L-histidyl-tRNA(His) + AMP + diphosphate + H(+). In Gloeothece citriformis (strain PCC 7424) (Cyanothece sp. (strain PCC 7424)), this protein is Histidine--tRNA ligase.